The sequence spans 366 residues: Chorismate synthase (366 aa).

R48 and R54 together coordinate NADP(+). FMN-binding positions include 125–127 (RSS), 238–239 (NA), G278, 293–297 (KPTSS), and R319.

It belongs to the chorismate synthase family. As to quaternary structure, homotetramer. FMNH2 is required as a cofactor.

It carries out the reaction 5-O-(1-carboxyvinyl)-3-phosphoshikimate = chorismate + phosphate. Its pathway is metabolic intermediate biosynthesis; chorismate biosynthesis; chorismate from D-erythrose 4-phosphate and phosphoenolpyruvate: step 7/7. Its function is as follows. Catalyzes the anti-1,4-elimination of the C-3 phosphate and the C-6 proR hydrogen from 5-enolpyruvylshikimate-3-phosphate (EPSP) to yield chorismate, which is the branch point compound that serves as the starting substrate for the three terminal pathways of aromatic amino acid biosynthesis. This reaction introduces a second double bond into the aromatic ring system. The protein is Chorismate synthase of Neisseria meningitidis serogroup B (strain ATCC BAA-335 / MC58).